The chain runs to 336 residues: MIEADRLVAPGSIVAEEVADRAIRPKLLEEYIGQPQVRSQMEIFIQAAKLRGDALDHLLIFGPPGLGKTTLANIVANEMGVNLRTTSGPVLEKAGDLAAMLTNLEPHDVLFIDEIHRLSPVVEEVLYPAMEDYQLDIMIGEGPAARSIKIDLPPFTLIGATTRAGSLTSPLRDRFGIVQRLEFYQVADLQHIVSRSARHMGLEMNDEASLEVAKRSRGTPRIANRLLRRVRDFAEVRHDGVINQHVASQALDMLNVDAEGFDYMDRKLLLAVIDKFFGGPVGLDNLAAAIGEERETIEDVLEPFLIQQGFLQRTPRGRMATTRAWNHFGITPPQMP.

Positions 4–184 (ADRLVAPGSI…FGIVQRLEFY (181 aa)) are large ATPase domain (RuvB-L). ATP-binding positions include Ile23, Arg24, Gly65, Lys68, Thr69, Thr70, 131–133 (EDY), Arg174, Tyr184, and Arg221. A Mg(2+)-binding site is contributed by Thr69. Residues 185 to 255 (QVADLQHIVS…VASQALDMLN (71 aa)) form a small ATPAse domain (RuvB-S) region. The tract at residues 258-336 (AEGFDYMDRK…HFGITPPQMP (79 aa)) is head domain (RuvB-H). Arg294, Arg313, and Arg318 together coordinate DNA.

The protein belongs to the RuvB family. As to quaternary structure, homohexamer. Forms an RuvA(8)-RuvB(12)-Holliday junction (HJ) complex. HJ DNA is sandwiched between 2 RuvA tetramers; dsDNA enters through RuvA and exits via RuvB. An RuvB hexamer assembles on each DNA strand where it exits the tetramer. Each RuvB hexamer is contacted by two RuvA subunits (via domain III) on 2 adjacent RuvB subunits; this complex drives branch migration. In the full resolvosome a probable DNA-RuvA(4)-RuvB(12)-RuvC(2) complex forms which resolves the HJ.

Its subcellular location is the cytoplasm. The enzyme catalyses ATP + H2O = ADP + phosphate + H(+). The RuvA-RuvB-RuvC complex processes Holliday junction (HJ) DNA during genetic recombination and DNA repair, while the RuvA-RuvB complex plays an important role in the rescue of blocked DNA replication forks via replication fork reversal (RFR). RuvA specifically binds to HJ cruciform DNA, conferring on it an open structure. The RuvB hexamer acts as an ATP-dependent pump, pulling dsDNA into and through the RuvAB complex. RuvB forms 2 homohexamers on either side of HJ DNA bound by 1 or 2 RuvA tetramers; 4 subunits per hexamer contact DNA at a time. Coordinated motions by a converter formed by DNA-disengaged RuvB subunits stimulates ATP hydrolysis and nucleotide exchange. Immobilization of the converter enables RuvB to convert the ATP-contained energy into a lever motion, pulling 2 nucleotides of DNA out of the RuvA tetramer per ATP hydrolyzed, thus driving DNA branch migration. The RuvB motors rotate together with the DNA substrate, which together with the progressing nucleotide cycle form the mechanistic basis for DNA recombination by continuous HJ branch migration. Branch migration allows RuvC to scan DNA until it finds its consensus sequence, where it cleaves and resolves cruciform DNA. This is Holliday junction branch migration complex subunit RuvB from Cronobacter sakazakii (strain ATCC BAA-894) (Enterobacter sakazakii).